We begin with the raw amino-acid sequence, 360 residues long: Photosystem II protein D1 (360 aa).

Transmembrane regions (helical) follow at residues 29-46, 118-133, and 142-156; these read YIGWFGVVMIPTLLTATS, HFLLGVCCYIGREWEL, and WISVAFTAPVAAAAA. Residue H118 coordinates chlorophyll a. A pheophytin a-binding site is contributed by Y126. The [CaMn4O5] cluster site is built by D170 and E189. A helical membrane pass occupies residues 197–218; sequence FHQLGVAGVFGGSLFSAMHGSL. Residue H198 coordinates chlorophyll a. A quinone is bound by residues H215 and 264–265; that span reads SF. A Fe cation-binding site is contributed by H215. Residue H272 participates in Fe cation binding. A helical membrane pass occupies residues 274–288; that stretch reads FLGAWPVVGIWLTSM. Residues H332, E333, D342, and A344 each coordinate [CaMn4O5] cluster. The propeptide occupies 345-360; sequence SGDSCPVALVAPSING.

It belongs to the reaction center PufL/M/PsbA/D family. PSII is composed of 1 copy each of membrane proteins PsbA, PsbB, PsbC, PsbD, PsbE, PsbF, PsbH, PsbI, PsbJ, PsbK, PsbL, PsbM, PsbT, PsbX, PsbY, PsbZ, Psb30/Ycf12, at least 3 peripheral proteins of the oxygen-evolving complex and a large number of cofactors. It forms dimeric complexes. The cofactor is The D1/D2 heterodimer binds P680, chlorophylls that are the primary electron donor of PSII, and subsequent electron acceptors. It shares a non-heme iron and each subunit binds pheophytin, quinone, additional chlorophylls, carotenoids and lipids. D1 provides most of the ligands for the Mn4-Ca-O5 cluster of the oxygen-evolving complex (OEC). There is also a Cl(-1) ion associated with D1 and D2, which is required for oxygen evolution. The PSII complex binds additional chlorophylls, carotenoids and specific lipids.. Tyr-161 forms a radical intermediate that is referred to as redox-active TyrZ, YZ or Y-Z. In terms of processing, C-terminally processed by CTPA; processing is essential to allow assembly of the oxygen-evolving complex and thus photosynthetic growth.

Its subcellular location is the plastid. It is found in the chloroplast thylakoid membrane. The catalysed reaction is 2 a plastoquinone + 4 hnu + 2 H2O = 2 a plastoquinol + O2. In terms of biological role, photosystem II (PSII) is a light-driven water:plastoquinone oxidoreductase that uses light energy to abstract electrons from H(2)O, generating O(2) and a proton gradient subsequently used for ATP formation. It consists of a core antenna complex that captures photons, and an electron transfer chain that converts photonic excitation into a charge separation. The D1/D2 (PsbA/PsbD) reaction center heterodimer binds P680, the primary electron donor of PSII as well as several subsequent electron acceptors. The sequence is that of Photosystem II protein D1 from Palmaria palmata (Dulse).